We begin with the raw amino-acid sequence, 527 residues long: Transcription factor RBF1 (527 aa).

Disordered regions lie at residues methionine 1–serine 36, alanine 258–glutamate 281, histidine 328–alanine 365, glutamine 395–aspartate 433, and threonine 470–leucine 527. The DNA-binding element occupies histidine 160–histidine 300. Residues asparagine 263 to glutamate 281 show a composition bias toward basic and acidic residues. Low complexity-rich tracts occupy residues glutamine 332 to alanine 365 and glutamine 395 to threonine 428.

It belongs to the RBF1 family.

The protein localises to the nucleus. Its subcellular location is the chromosome. It is found in the telomere. Transcriptional activator that binds to the RPG box and to telomeres. Involved in the regulation of the transition between yeast and filamentous forms and plays a role in virulence. Induces expression of HWP1, a major hyphal cell protein and virulence factor. This chain is Transcription factor RBF1 (RBF1), found in Candida albicans (Yeast).